Reading from the N-terminus, the 516-residue chain is Gamma-aminobutyrate transaminase 1, mitochondrial (516 aa).

The N-terminal 47 residues, 1–47 (MVIARGLLRSNASSSSSQAINLLKYVTSTGSLQGHTQNLCDASTRHF), are a transit peptide targeting the mitochondrion. Residues 45–60 (RHFSSVPSPQSNSTEE) show a composition bias toward polar residues. The disordered stretch occupies residues 45 to 64 (RHFSSVPSPQSNSTEENGFK). Residue 171–172 (GS) coordinates pyridoxal 5'-phosphate. Y204 is a substrate binding site. Pyridoxal 5'-phosphate is bound at residue D311. K340 contacts substrate. Residue K340 is modified to N6-(pyridoxal phosphate)lysine.

It belongs to the class-III pyridoxal-phosphate-dependent aminotransferase family.

Its subcellular location is the mitochondrion. The catalysed reaction is 4-aminobutanoate + pyruvate = succinate semialdehyde + L-alanine. It catalyses the reaction 4-aminobutanoate + glyoxylate = succinate semialdehyde + glycine. Transaminase that degrades gamma-amino butyric acid (GABA) and uses pyruvate as amino-group acceptor, but not 2-oxoglutarate. The sequence is that of Gamma-aminobutyrate transaminase 1, mitochondrial from Oryza sativa subsp. indica (Rice).